The following is a 349-amino-acid chain: tRNA pseudouridine synthase D (349 aa).

Position 27 (Phe-27) interacts with substrate. The active-site Nucleophile is the Asp-80. Substrate is bound at residue Asn-129. In terms of domain architecture, TRUD spans 155–303 (GVPNYFGAQR…VEAARRAMLL (149 aa)). Phe-329 is a substrate binding site.

The protein belongs to the pseudouridine synthase TruD family.

The catalysed reaction is uridine(13) in tRNA = pseudouridine(13) in tRNA. Functionally, responsible for synthesis of pseudouridine from uracil-13 in transfer RNAs. This Escherichia fergusonii (strain ATCC 35469 / DSM 13698 / CCUG 18766 / IAM 14443 / JCM 21226 / LMG 7866 / NBRC 102419 / NCTC 12128 / CDC 0568-73) protein is tRNA pseudouridine synthase D.